The primary structure comprises 286 residues: Bifunctional protein FolD (286 aa).

Residues 165–167 (GRS) and Ser190 contribute to the NADP(+) site.

This sequence belongs to the tetrahydrofolate dehydrogenase/cyclohydrolase family. In terms of assembly, homodimer.

It catalyses the reaction (6R)-5,10-methylene-5,6,7,8-tetrahydrofolate + NADP(+) = (6R)-5,10-methenyltetrahydrofolate + NADPH. The catalysed reaction is (6R)-5,10-methenyltetrahydrofolate + H2O = (6R)-10-formyltetrahydrofolate + H(+). It participates in one-carbon metabolism; tetrahydrofolate interconversion. Its function is as follows. Catalyzes the oxidation of 5,10-methylenetetrahydrofolate to 5,10-methenyltetrahydrofolate and then the hydrolysis of 5,10-methenyltetrahydrofolate to 10-formyltetrahydrofolate. In Burkholderia orbicola (strain MC0-3), this protein is Bifunctional protein FolD.